The primary structure comprises 252 residues: ATP synthase subunit a, chloroplastic (252 aa).

Helical transmembrane passes span 41 to 61 (GQVL…TLLA), 100 to 120 (VPFL…GALL), 138 to 158 (DINT…YAGI), 204 to 224 (LIVG…LMLL), and 225 to 245 (GVFT…AYIG).

This sequence belongs to the ATPase A chain family. As to quaternary structure, F-type ATPases have 2 components, CF(1) - the catalytic core - and CF(0) - the membrane proton channel. CF(1) has five subunits: alpha(3), beta(3), gamma(1), delta(1), epsilon(1). CF(0) has four main subunits: a, b, b' and c.

It is found in the plastid. Its subcellular location is the chloroplast thylakoid membrane. Key component of the proton channel; it plays a direct role in the translocation of protons across the membrane. The protein is ATP synthase subunit a, chloroplastic of Oedogonium cardiacum (Filamentous green alga).